A 427-amino-acid chain; its full sequence is Glutamate-1-semialdehyde 2,1-aminomutase (427 aa).

N6-(pyridoxal phosphate)lysine is present on K265.

It belongs to the class-III pyridoxal-phosphate-dependent aminotransferase family. HemL subfamily. Homodimer. It depends on pyridoxal 5'-phosphate as a cofactor.

Its subcellular location is the cytoplasm. It catalyses the reaction (S)-4-amino-5-oxopentanoate = 5-aminolevulinate. It functions in the pathway porphyrin-containing compound metabolism; protoporphyrin-IX biosynthesis; 5-aminolevulinate from L-glutamyl-tRNA(Glu): step 2/2. The polypeptide is Glutamate-1-semialdehyde 2,1-aminomutase (Burkholderia lata (strain ATCC 17760 / DSM 23089 / LMG 22485 / NCIMB 9086 / R18194 / 383)).